Consider the following 332-residue polypeptide: Chorismate synthase (332 aa).

Residue R46 coordinates NADP(+). FMN-binding positions include 123–125 (HFS), G253, 268–272 (KPTSS), and R295.

Belongs to the chorismate synthase family. As to quaternary structure, homotetramer. FMNH2 is required as a cofactor.

The catalysed reaction is 5-O-(1-carboxyvinyl)-3-phosphoshikimate = chorismate + phosphate. Its pathway is metabolic intermediate biosynthesis; chorismate biosynthesis; chorismate from D-erythrose 4-phosphate and phosphoenolpyruvate: step 7/7. Catalyzes the anti-1,4-elimination of the C-3 phosphate and the C-6 proR hydrogen from 5-enolpyruvylshikimate-3-phosphate (EPSP) to yield chorismate, which is the branch point compound that serves as the starting substrate for the three terminal pathways of aromatic amino acid biosynthesis. This reaction introduces a second double bond into the aromatic ring system. The chain is Chorismate synthase from Chitinophaga pinensis (strain ATCC 43595 / DSM 2588 / LMG 13176 / NBRC 15968 / NCIMB 11800 / UQM 2034).